A 590-amino-acid polypeptide reads, in one-letter code: Cytidine monophosphate-N-acetylneuraminic acid hydroxylase (590 aa).

Positions 14 to 112 constitute a Rieske domain; it reads LSPVEVANLK…VEMDENNGLL (99 aa). [2Fe-2S] cluster is bound by residues cysteine 54, histidine 56, cysteine 75, and histidine 78.

Belongs to the CMP-Neu5Ac hydroxylase family. The cofactor is [2Fe-2S] cluster.

It localises to the cytoplasm. It catalyses the reaction CMP-N-acetyl-beta-neuraminate + 2 Fe(II)-[cytochrome b5] + O2 + 2 H(+) = CMP-N-glycoloyl-beta-neuraminate + 2 Fe(III)-[cytochrome b5] + H2O. It functions in the pathway amino-sugar metabolism; N-acetylneuraminate metabolism. In terms of biological role, sialic acids are components of carbohydrate chains of glycoconjugates and are involved in cell-cell recognition and cell-pathogen interactions. Catalyzes the conversion of CMP-N-acetylneuraminic acid (CMP-Neu5Ac) into its hydroxylated derivative CMP-N-glycolylneuraminic acid (CMP-Neu5Gc), a sialic acid abundantly expressed at the surface of many cells. The polypeptide is Cytidine monophosphate-N-acetylneuraminic acid hydroxylase (CMAH) (Macaca mulatta (Rhesus macaque)).